The chain runs to 184 residues: Uroplakin-2 (184 aa).

Positions 1 to 25 (MASPLPVRTLPLILILLAVLAPGAS) are cleaved as a signal peptide. The propeptide occupies 26–84 (DFNISSLSGPLSPALTESLLVALPPCHLTGGNATLMVRRANDSKVVKSSFMVPPCRGRR). 3 N-linked (GlcNAc...) asparagine glycosylation sites follow: Asn28, Asn57, and Asn66. The Lumenal segment spans residues 85–155 (ELVSVVDSGS…IGLGMARTGG (71 aa)). A helical membrane pass occupies residues 156–180 (MVVITVLLSVAMFLLVVGFITALAL). At 181 to 184 (GARK) the chain is on the cytoplasmic side.

This sequence belongs to the uroplakin-2 family. As to quaternary structure, interacts with uroplakin-1a (UPK1A). As to expression, expressed only in the urothelium. Localizes to urothelial superficial cells.

The protein localises to the cell membrane. Functionally, component of the asymmetric unit membrane (AUM); a highly specialized biomembrane elaborated by terminally differentiated urothelial cells. May play an important role in regulating the assembly of the AUM. In Sus scrofa (Pig), this protein is Uroplakin-2 (UPK2).